The following is a 596-amino-acid chain: Uptake hydrogenase large subunit (596 aa).

Residues Cys-75, Cys-78, Cys-575, and Cys-578 each contribute to the Ni(2+) site.

The protein belongs to the [NiFe]/[NiFeSe] hydrogenase large subunit family. As to quaternary structure, heterodimer of a large and a small subunit. Requires Ni(2+) as cofactor.

It localises to the cell membrane. The catalysed reaction is H2 + A = AH2. This enzyme recycles the H(2) produced by nitrogenase to increase the production of ATP and to protect nitrogenase against inhibition or damage by O(2) under carbon- or phosphate-limited conditions. This is Uptake hydrogenase large subunit (hupB) from Rhizobium leguminosarum bv. viciae.